The sequence spans 492 residues: Octanoyltransferase (492 aa).

The unknown stretch occupies residues 1-255 (MRCILLGSGT…GYDGLEAIID (255 aa)). A lipB domain region spans residues 256-492 (EKGIRIKDFE…AVFRRNFGAL (237 aa)). Residues 305 to 492 (RKPQNTLLFC…AVFRRNFGAL (188 aa)) form the BPL/LPL catalytic domain. Residues 350–357 (RGGDITYH), 423–425 (AIG), and 436–438 (GFA) contribute to the substrate site. C454 acts as the Acyl-thioester intermediate in catalysis.

In the C-terminal section; belongs to the LipB family.

It is found in the cytoplasm. The catalysed reaction is octanoyl-[ACP] + L-lysyl-[protein] = N(6)-octanoyl-L-lysyl-[protein] + holo-[ACP] + H(+). It functions in the pathway protein modification; protein lipoylation via endogenous pathway; protein N(6)-(lipoyl)lysine from octanoyl-[acyl-carrier-protein]: step 1/2. Catalyzes the transfer of endogenously produced octanoic acid from octanoyl-acyl-carrier-protein onto the lipoyl domains of lipoate-dependent enzymes. Lipoyl-ACP can also act as a substrate although octanoyl-ACP is likely to be the physiological substrate. The polypeptide is Octanoyltransferase (Porphyromonas gingivalis (strain ATCC BAA-308 / W83)).